The following is a 199-amino-acid chain: MSSMEKNLFNLKFAAKELHRNAKKCEKEEKTEKAKIKKAIQKGNTEIARIHAENAIRQKNQGINFLRMSARVDAVAARVQTAVTMGKVTKSMAGVVKSMDTTLKSMNLEKISALMDKFEHQFETLDVQTQQMEDTMSNTTTLTTPQNQVDNLLHEMADEAGLDLNMELPQGQTGSVGTSVASTEQDELSQRLARLRDQV.

Coiled-coil stretches lie at residues 15–42 and 178–199; these read AKEL…AIQK and TSVA…RDQV. The tract at residues 167–199 is disordered; it reads ELPQGQTGSVGTSVASTEQDELSQRLARLRDQV. A compositionally biased stretch (polar residues) spans 170 to 183; that stretch reads QGQTGSVGTSVAST. An MIT-interacting motif motif is present at residues 186–196; that stretch reads DELSQRLARLR.

It belongs to the SNF7 family.

It is found in the cytoplasm. It localises to the cytosol. The protein localises to the endosome. The protein resides in the late endosome membrane. Probable peripherally associated component of the endosomal sorting required for transport complex III (ESCRT-III) which is involved in multivesicular bodies (MVBs) formation and sorting of endosomal cargo proteins into MVBs. MVBs contain intraluminal vesicles (ILVs) that are generated by invagination and scission from the limiting membrane of the endosome and mostly are delivered to lysosomes enabling degradation of membrane proteins, such as stimulated growth factor receptors, lysosomal enzymes and lipids. The protein is Charged multivesicular body protein 1b (chmp1b) of Xenopus tropicalis (Western clawed frog).